We begin with the raw amino-acid sequence, 99 residues long: Nucleoid-associated protein SSU98_0195 (99 aa).

This sequence belongs to the YbaB/EbfC family. In terms of assembly, homodimer.

It is found in the cytoplasm. The protein localises to the nucleoid. Functionally, binds to DNA and alters its conformation. May be involved in regulation of gene expression, nucleoid organization and DNA protection. The polypeptide is Nucleoid-associated protein SSU98_0195 (Streptococcus suis (strain 98HAH33)).